Reading from the N-terminus, the 318-residue chain is Small ribosomal subunit protein RACK1 (318 aa).

WD repeat units lie at residues 11 to 44 (GHRG…LSWG), 65 to 95 (GHSA…RLWN), 107 to 137 (GHTK…RVWN), 150 to 182 (AHTD…KVWD), 194 to 224 (GHTN…RLWD), 235 to 264 (AAGA…RIFD), and 282 to 315 (KKIV…WGVS).

This sequence belongs to the WD repeat G protein beta family. Ribosomal protein RACK1 subfamily.

The sequence is that of Small ribosomal subunit protein RACK1 from Trypanosoma brucei brucei.